Consider the following 146-residue polypeptide: Large ribosomal subunit protein uL15 (146 aa).

The segment at 1–59 (MRLEELKAPAGANKRTKRVGRGTGSGHGKTSTRGHKGQKSRSGGGVRPGFEGGQMPLQR) is disordered. The segment covering 30–39 (TSTRGHKGQK) has biased composition (basic residues). Residues 42–52 (SGGGVRPGFEG) are compositionally biased toward gly residues.

It belongs to the universal ribosomal protein uL15 family. In terms of assembly, part of the 50S ribosomal subunit.

Its function is as follows. Binds to the 23S rRNA. This chain is Large ribosomal subunit protein uL15, found in Syntrophomonas wolfei subsp. wolfei (strain DSM 2245B / Goettingen).